An 81-amino-acid polypeptide reads, in one-letter code: Putative membrane protein insertion efficiency factor (81 aa).

Belongs to the UPF0161 family.

It is found in the cell inner membrane. In terms of biological role, could be involved in insertion of integral membrane proteins into the membrane. The polypeptide is Putative membrane protein insertion efficiency factor (Thermotoga maritima (strain ATCC 43589 / DSM 3109 / JCM 10099 / NBRC 100826 / MSB8)).